Reading from the N-terminus, the 334-residue chain is MSKRKAPQESPNEGITDFLVELANYERNVNRAIHKYNAYRKAASVIAKYPTKIKSGTEAKKLDGVGAKIAEKIDEFLATGKLRKLEKIRQDDTSSSINFLTRVTGIGPAAARKFFDEGIKTLDDLRNNEHKLNHHQKIGLKHFDDFEKRIPRKEMLQMQEIILDKVNNLDPEYIATVCGSFRRGAESSGDMDILLTHPDFTSESAKQPRLLHQVVQCLEDCNFITDTLVKGDTKFMGVCQLPCESDQDYPYRRIDIRLIPKDQYYCGVLYFTGSDIFNKNMRTHALEKGFTLNEYTLRPLGVTGIAGEPLPIDSEKDIFDYIQWKYREPKDRSE.

Positions 60, 62, and 65 each coordinate K(+). The Na(+) site is built by K60, L62, and V65. K72 acts as the Nucleophile; Schiff-base intermediate with DNA; for 5'-dRP lyase activity in catalysis. The residue at position 83 (R83) is an Omega-N-methylarginine; by PRMT6. K(+) contacts are provided by T101, V103, and I106. T101, V103, and I106 together coordinate Na(+). R149 provides a ligand contact to a 2'-deoxyribonucleoside 5'-triphosphate. At R152 the chain carries Omega-N-methylarginine; by PRMT6. Residues S180, R183, G189, and D190 each coordinate a 2'-deoxyribonucleoside 5'-triphosphate. The tract at residues 183 to 192 is DNA-binding; the sequence is RGAESSGDMD. Mg(2+) contacts are provided by D190, D192, and D255.

Belongs to the DNA polymerase type-X family. As to quaternary structure, monomer. The cofactor is Mg(2+). Methylation by PRMT6 stimulates the polymerase activity by enhancing DNA binding and processivity. Post-translationally, ubiquitinated: monoubiquitinated by huwe1/arf-bp1. Monoubiquitinated protein is then the target of stub1/chip, which catalyzes polyubiquitination from monoubiquitin, leading to degradation by the proteasome. usp47 mediates the deubiquitination of monoubiquitinated protein, preventing polyubiquitination by STUB1/CHIP and its subsequent degradation.

The protein resides in the nucleus. It is found in the cytoplasm. The enzyme catalyses DNA(n) + a 2'-deoxyribonucleoside 5'-triphosphate = DNA(n+1) + diphosphate. It catalyses the reaction a 5'-end 2'-deoxyribose-2'-deoxyribonucleotide-DNA = (2E,4S)-4-hydroxypenten-2-al-5-phosphate + a 5'-end 5'-phospho-2'-deoxyribonucleoside-DNA + H(+). The catalysed reaction is 2'-deoxyribonucleotide-(2'-deoxyribose 5'-phosphate)-2'-deoxyribonucleotide-DNA = a 3'-end 2'-deoxyribonucleotide-(2,3-dehydro-2,3-deoxyribose 5'-phosphate)-DNA + a 5'-end 5'-phospho-2'-deoxyribonucleoside-DNA + H(+). Functionally, repair polymerase that plays a key role in base-excision repair. During this process, the damaged base is excised by specific DNA glycosylases, the DNA backbone is nicked at the abasic site by an apurinic/apyrimidic (AP) endonuclease, and POLB removes 5'-deoxyribose-phosphate from the preincised AP site acting as a 5'-deoxyribose-phosphate lyase (5'-dRP lyase); through its DNA polymerase activity, it adds one nucleotide to the 3' end of the arising single-nucleotide gap. Conducts 'gap-filling' DNA synthesis in a stepwise distributive fashion rather than in a processive fashion as for other DNA polymerases. It is also able to cleave sugar-phosphate bonds 3' to an intact AP site, acting as an AP lyase. The sequence is that of DNA polymerase beta (polb) from Xenopus laevis (African clawed frog).